The following is a 261-amino-acid chain: Triosephosphate isomerase (261 aa).

10-12 is a substrate binding site; sequence NWK. Histidine 100 (electrophile) is an active-site residue. The active-site Proton acceptor is the glutamate 172. Substrate-binding positions include glycine 178, serine 218, and 239 to 240; that span reads GG.

The protein belongs to the triosephosphate isomerase family. As to quaternary structure, homodimer.

It is found in the cytoplasm. It carries out the reaction D-glyceraldehyde 3-phosphate = dihydroxyacetone phosphate. It functions in the pathway carbohydrate biosynthesis; gluconeogenesis. The protein operates within carbohydrate degradation; glycolysis; D-glyceraldehyde 3-phosphate from glycerone phosphate: step 1/1. In terms of biological role, involved in the gluconeogenesis. Catalyzes stereospecifically the conversion of dihydroxyacetone phosphate (DHAP) to D-glyceraldehyde-3-phosphate (G3P). In Mycobacterium leprae (strain TN), this protein is Triosephosphate isomerase.